We begin with the raw amino-acid sequence, 134 residues long: Small ribosomal subunit protein uS8 (134 aa).

The protein belongs to the universal ribosomal protein uS8 family. In terms of assembly, part of the 30S ribosomal subunit. Contacts proteins S5 and S12.

Its function is as follows. One of the primary rRNA binding proteins, it binds directly to 16S rRNA central domain where it helps coordinate assembly of the platform of the 30S subunit. The protein is Small ribosomal subunit protein uS8 of Kosmotoga olearia (strain ATCC BAA-1733 / DSM 21960 / TBF 19.5.1).